The chain runs to 493 residues: Tripartite motif-containing protein 5 (493 aa).

An N-acetylalanine modification is found at alanine 2. Residues 15–58 (CPICLELLTQPLSLDCGHSFCQACLTANHKTSMPDGERSCPVCR) form an RING-type zinc finger. Position 85 is a phosphoserine (serine 85). The B box-type zinc-finger motif lies at 90–131 (QKVDHCARHGEKLLLFCREDRKVICWLCERSQEHRGHHTFLM). Positions 95, 98, 117, and 123 each coordinate Zn(2+). Residues 130–240 (LMEEVAQEYQ…LISDLEHRLQ (111 aa)) adopt a coiled-coil conformation. The segment at 185–198 (FEQLRHILDWVESN) is required for interaction with GABARAP and for autophagy. The B30.2/SPRY domain maps to 281–493 (LQVTLEVLRE…VPMTLCSPSS (213 aa)).

Belongs to the TRIM/RBCC family. Can form homodimers and homotrimers. In addition to lower-order dimerization, also exhibits a higher-order multimerization and both low- and high-order multimerizations are essential for its restriction activity. Interacts with BTBD1 and BTBD2. Interacts with PSMC4, PSMC5, PSMD7 and HSPA8/HSC70. Interacts (via B30.2/SPRY domain) with HSPA1A/B. Interacts with PSMC2, MAP3K7/TAK1, TAB2 and TAB3. Interacts with SQSTM1. Interacts with TRIM6 and TRIM34. Interacts with ULK1 (phosphorylated form), GABARAP, GABARAPL1, GABARAPL2, MAP1LC3A, MAP1LC3C and BECN1. Post-translationally, degraded in a proteasome-independent fashion in the absence of viral infection but in a proteasome-dependent fashion following exposure to restriction sensitive virus. Autoubiquitinated in a RING finger- and UBE2D2-dependent manner. Monoubiquitinated by TRIM21. Deubiquitinated by Yersinia YopJ. Ubiquitination may not lead to proteasomal degradation.

The protein resides in the cytoplasm. The protein localises to the nucleus. The catalysed reaction is S-ubiquitinyl-[E2 ubiquitin-conjugating enzyme]-L-cysteine + [acceptor protein]-L-lysine = [E2 ubiquitin-conjugating enzyme]-L-cysteine + N(6)-ubiquitinyl-[acceptor protein]-L-lysine.. The protein operates within protein modification; protein ubiquitination. Capsid-specific restriction factor that prevents infection from non-host-adapted retroviruses. Blocks viral replication early in the life cycle, after viral entry but before reverse transcription. In addition to acting as a capsid-specific restriction factor, also acts as a pattern recognition receptor that activates innate immune signaling in response to the retroviral capsid lattice. Binding to the viral capsid triggers its E3 ubiquitin ligase activity, and in concert with the heterodimeric ubiquitin conjugating enzyme complex UBE2V1-UBE2N (also known as UBC13-UEV1A complex) generates 'Lys-63'-linked polyubiquitin chains, which in turn are catalysts in the autophosphorylation of the MAP3K7/TAK1 complex (includes TAK1, TAB2, and TAB3). Activation of the MAP3K7/TAK1 complex by autophosphorylation results in the induction and expression of NF-kappa-B and MAPK-responsive inflammatory genes, thereby leading to an innate immune response in the infected cell. Plays a role in regulating autophagy through activation of autophagy regulator BECN1 by causing its dissociation from its inhibitors BCL2 and TAB2. The sequence is that of Tripartite motif-containing protein 5 (TRIM5) from Hylobates lar (Lar gibbon).